The following is a 189-amino-acid chain: Protein GrpE (189 aa).

The segment at 1–22 (MKEQQKETEQNIEEINDETVTE) is disordered. Residues 10-22 (QNIEEINDETVTE) are compositionally biased toward acidic residues.

The protein belongs to the GrpE family. Homodimer.

It is found in the cytoplasm. Participates actively in the response to hyperosmotic and heat shock by preventing the aggregation of stress-denatured proteins, in association with DnaK and GrpE. It is the nucleotide exchange factor for DnaK and may function as a thermosensor. Unfolded proteins bind initially to DnaJ; upon interaction with the DnaJ-bound protein, DnaK hydrolyzes its bound ATP, resulting in the formation of a stable complex. GrpE releases ADP from DnaK; ATP binding to DnaK triggers the release of the substrate protein, thus completing the reaction cycle. Several rounds of ATP-dependent interactions between DnaJ, DnaK and GrpE are required for fully efficient folding. This Leuconostoc citreum (strain KM20) protein is Protein GrpE.